Reading from the N-terminus, the 349-residue chain is Protein-glutamate methylesterase/protein-glutamine glutaminase (349 aa).

Residues 2–118 (RVLVVDDSAL…VDLSSVAQEL (117 aa)) form the Response regulatory domain. A 4-aspartylphosphate modification is found at Asp-52. The CheB-type methylesterase domain occupies 159–345 (VLIGSSTGGP…EEIVRFLEVK (187 aa)). Active-site residues include Ser-164, His-191, and Asp-287.

This sequence belongs to the CheB family. Phosphorylated by CheA. Phosphorylation of the N-terminal regulatory domain activates the methylesterase activity.

The protein resides in the cytoplasm. The catalysed reaction is [protein]-L-glutamate 5-O-methyl ester + H2O = L-glutamyl-[protein] + methanol + H(+). The enzyme catalyses L-glutaminyl-[protein] + H2O = L-glutamyl-[protein] + NH4(+). In terms of biological role, involved in chemotaxis. Part of a chemotaxis signal transduction system that modulates chemotaxis in response to various stimuli. Catalyzes the demethylation of specific methylglutamate residues introduced into the chemoreceptors (methyl-accepting chemotaxis proteins or MCP) by CheR. Also mediates the irreversible deamidation of specific glutamine residues to glutamic acid. This Archaeoglobus fulgidus (strain ATCC 49558 / DSM 4304 / JCM 9628 / NBRC 100126 / VC-16) protein is Protein-glutamate methylesterase/protein-glutamine glutaminase.